We begin with the raw amino-acid sequence, 243 residues long: MLTFLIPTAKEMTTPKESHPHLLPQDSQAILKIMTAMTTEDLAKSYRIKEEAAKKEQQRWQDMASQQSLAYPAYQLFNGLMYRHIKRDKLTTQEQAYLTQQVYITSSFYGIIPANHPIAEHRHDFHTRIKIEGQSLKSYWRPCYNQFAKEHPQVISLLSSEFDDVFSKDCKQLWISPKFMAEKEGQFKTHSTISKKARGAFLTACMENNCQTVDSLKSLVFAGFYYHPDLSTDYEFVYIKKEA.

Belongs to the UPF0246 family.

The polypeptide is UPF0246 protein SpyM51747 (Streptococcus pyogenes serotype M5 (strain Manfredo)).